Here is a 133-residue protein sequence, read N- to C-terminus: MGFYQGPDNRKITGGLKGKHRDKRKYEIGNPPTFTTLSAEDIRIKDRTLGGNFKVRLKYTTTANVLDPATNTAKKVKILEILETPANKELARRGIIIRGAKIRTEAGLAVVTSRPGQDGVINAVLLKNESQRS.

The interval methionine 1–proline 31 is disordered.

The protein belongs to the eukaryotic ribosomal protein eS8 family. As to quaternary structure, part of the 30S ribosomal subunit.

The sequence is that of Small ribosomal subunit protein eS8 from Saccharolobus solfataricus (strain ATCC 35092 / DSM 1617 / JCM 11322 / P2) (Sulfolobus solfataricus).